Reading from the N-terminus, the 135-residue chain is ATP synthase epsilon chain (135 aa).

It belongs to the ATPase epsilon chain family. F-type ATPases have 2 components, CF(1) - the catalytic core - and CF(0) - the membrane proton channel. CF(1) has five subunits: alpha(3), beta(3), gamma(1), delta(1), epsilon(1). CF(0) has three main subunits: a, b and c.

It localises to the cell inner membrane. Produces ATP from ADP in the presence of a proton gradient across the membrane. This Rhodopseudomonas palustris (strain BisB5) protein is ATP synthase epsilon chain.